We begin with the raw amino-acid sequence, 179 residues long: Large ribosomal subunit protein uL5 (179 aa).

The protein belongs to the universal ribosomal protein uL5 family. As to quaternary structure, part of the 50S ribosomal subunit; part of the 5S rRNA/L5/L18/L25 subcomplex. Contacts the 5S rRNA and the P site tRNA. Forms a bridge to the 30S subunit in the 70S ribosome.

Its function is as follows. This is one of the proteins that bind and probably mediate the attachment of the 5S RNA into the large ribosomal subunit, where it forms part of the central protuberance. In the 70S ribosome it contacts protein S13 of the 30S subunit (bridge B1b), connecting the 2 subunits; this bridge is implicated in subunit movement. Contacts the P site tRNA; the 5S rRNA and some of its associated proteins might help stabilize positioning of ribosome-bound tRNAs. The chain is Large ribosomal subunit protein uL5 from Thermoanaerobacter sp. (strain X514).